We begin with the raw amino-acid sequence, 190 residues long: NADH-quinone oxidoreductase subunit B (190 aa).

4 residues coordinate [4Fe-4S] cluster: cysteine 39, cysteine 40, cysteine 104, and cysteine 135.

This sequence belongs to the complex I 20 kDa subunit family. NDH-1 is composed of 14 different subunits. Subunits NuoB, C, D, E, F, and G constitute the peripheral sector of the complex. [4Fe-4S] cluster serves as cofactor.

It is found in the cell inner membrane. The enzyme catalyses a quinone + NADH + 5 H(+)(in) = a quinol + NAD(+) + 4 H(+)(out). In terms of biological role, NDH-1 shuttles electrons from NADH, via FMN and iron-sulfur (Fe-S) centers, to quinones in the respiratory chain. The immediate electron acceptor for the enzyme in this species is believed to be a menaquinone. Couples the redox reaction to proton translocation (for every two electrons transferred, four hydrogen ions are translocated across the cytoplasmic membrane), and thus conserves the redox energy in a proton gradient. The chain is NADH-quinone oxidoreductase subunit B from Prosthecochloris aestuarii (strain DSM 271 / SK 413).